Consider the following 146-residue polypeptide: Core protein OPG114 (146 aa).

Belongs to the orthopoxvirus OPG114 family. Part of a complex composed of the kinase OPG054, OPG092, OPG100, OPG114, OPG115, OPG142 and OPG157.

Its subcellular location is the virion. Late protein which is part of a large complex required for early virion morphogenesis. This complex participates in the formation of virosomes and the incorporation of virosomal contents into nascent immature virions. The protein is Core protein OPG114 (OPG114) of Monkeypox virus.